The following is a 280-amino-acid chain: Succinate dehydrogenase [ubiquinone] iron-sulfur subunit, mitochondrial (280 aa).

A mitochondrion-targeting transit peptide spans 1 to 28; sequence MAAVVALSLRRRFPAAALGGARLQACRG. One can recognise a 2Fe-2S ferredoxin-type domain in the interval 40–133; that stretch reads KKFAIYRWDP…VSKIYPLPHM (94 aa). K51 and K55 each carry N6-acetyllysine. Residues C93, C98, C101, and C113 each contribute to the [2Fe-2S] cluster site. Residues 146–218 form an interaction with SDHAF1 region; it reads FYAQYKSIEP…PAVLMQAYRW (73 aa). A 4Fe-4S ferredoxin-type domain is found at 176–206; it reads DREKLDGLYECILCACCSTSCPSYWWNGDKY. [4Fe-4S] cluster-binding residues include C186, C189, and C192. C196 provides a ligand contact to [3Fe-4S] cluster. W201 contributes to the a ubiquinone binding site. [3Fe-4S] cluster contacts are provided by C243 and C249. A [4Fe-4S] cluster-binding site is contributed by C253.

The protein belongs to the succinate dehydrogenase/fumarate reductase iron-sulfur protein family. As to quaternary structure, component of complex II composed of four subunits: the flavoprotein (FP) SDHA, iron-sulfur protein (IP) SDHB, and a cytochrome b560 composed of SDHC and SDHD. Interacts with SDHAF1; the interaction is required for iron-sulfur cluster incorporation into SDHB. It depends on [2Fe-2S] cluster as a cofactor. Requires [3Fe-4S] cluster as cofactor. [4Fe-4S] cluster is required as a cofactor.

It is found in the mitochondrion inner membrane. It catalyses the reaction a quinone + succinate = fumarate + a quinol. The catalysed reaction is (R)-malate + a quinone = enol-oxaloacetate + a quinol. The enzyme catalyses (S)-malate + a quinone = enol-oxaloacetate + a quinol. It functions in the pathway carbohydrate metabolism; tricarboxylic acid cycle; fumarate from succinate (eukaryal route): step 1/1. With respect to regulation, enol-oxaloacetate inhibits the succinate dehydrogenase activity. Its function is as follows. Iron-sulfur protein (IP) subunit of the succinate dehydrogenase complex (mitochondrial respiratory chain complex II), responsible for transferring electrons from succinate to ubiquinone (coenzyme Q). SDH also oxidizes malate to the non-canonical enol form of oxaloacetate, enol-oxaloacetate. Enol-oxaloacetate, which is a potent inhibitor of the succinate dehydrogenase activity, is further isomerized into keto-oxaloacetate. This Bos taurus (Bovine) protein is Succinate dehydrogenase [ubiquinone] iron-sulfur subunit, mitochondrial (SDHB).